The chain runs to 97 residues: Sorbitol dehydrogenase (97 aa).

C44 contacts Zn(2+). Residue Y50 coordinates substrate. The Zn(2+) site is built by H69 and E70.

Belongs to the zinc-containing alcohol dehydrogenase family. As to quaternary structure, homotetramer. The cofactor is Zn(2+).

The protein resides in the mitochondrion membrane. It localises to the cell projection. Its subcellular location is the cilium. It is found in the flagellum. It catalyses the reaction xylitol + NAD(+) = D-xylulose + NADH + H(+). It carries out the reaction L-iditol + NAD(+) = keto-L-sorbose + NADH + H(+). The enzyme catalyses keto-D-fructose + NADH + H(+) = D-sorbitol + NAD(+). Its function is as follows. Polyol dehydrogenase that catalyzes the reversible NAD(+)-dependent oxidation of various sugar alcohols. Is active with xylitol, L-iditol and D-sorbitol (D-glucitol) as substrates, leading to the C2-oxidized products D-xylulose, L-sorbose and D-fructose, respectively. Is a key enzyme in the polyol pathway that interconverts glucose and fructose via sorbitol, which constitutes an important alternate route for glucose metabolism. May play a role in sperm motility by using sorbitol as an alternative energy source for sperm motility. The protein is Sorbitol dehydrogenase (SORD) of Sus scrofa (Pig).